Consider the following 758-residue polypeptide: Glucan endo-1,3-beta-D-glucosidase (758 aa).

The tat-type signal signal peptide spans 1–34; sequence MSHASRRRWRRATTSAATAALLCGALLTFPSAPA. Residues 38-251 are beta-sandwich subdomain; sequence VRLGSGSYTT…SGYASVALLP (214 aa). The GH81 domain maps to 38–704; the sequence is VRLGSGSYTT…QWLSTLAEFG (667 aa). The tract at residues 252–342 is alpha/beta subdomain; sequence SPDDFDRYAP…EGDRFTTELT (91 aa). A (alpha/beta)6 barrel subdomain region spans residues 352–704; it reads TVDSADHQRL…QWLSTLAEFG (353 aa). 7 residues coordinate (1,3-beta-D-glucosyl)n: Tyr382, Lys386, Asp457, His461, Asn532, Glu534, and Glu538. Residue Asp457 is part of the active site. Residues Glu534 and Glu538 contribute to the active site.

Belongs to the glycosyl hydrolase 81 family. Post-translationally, predicted to be exported by the Tat system. The position of the signal peptide cleavage has not been experimentally proven.

The protein resides in the secreted. The enzyme catalyses Hydrolysis of (1-&gt;3)-beta-D-glucosidic linkages in (1-&gt;3)-beta-D-glucans.. Its function is as follows. Cleaves internal linkages in 1,3-beta-glucan. May contribute to biomass degradation by hydrolyzing the 1,3-beta-linked plant polymer callose that is present in decomposing plant tissue. The protein is Glucan endo-1,3-beta-D-glucosidase of Thermobifida fusca (strain YX).